We begin with the raw amino-acid sequence, 579 residues long: Glycine--tRNA ligase (579 aa).

A glycine-binding site is contributed by E175. Residues 207–209 (RNE) and 218–219 (RV) each bind ATP. A glycine-binding site is contributed by E226. 327-328 (EC) contacts ATP. 442–444 (EPS) provides a ligand contact to glycine. ATP is bound at residue R449.

This sequence belongs to the class-II aminoacyl-tRNA synthetase family. As to quaternary structure, homodimer.

It carries out the reaction tRNA(Gly) + glycine + ATP = glycyl-tRNA(Gly) + AMP + diphosphate. The catalysed reaction is 2 ATP + H(+) = P(1),P(4)-bis(5'-adenosyl) tetraphosphate + diphosphate. Functionally, catalyzes the ATP-dependent ligation of glycine to the 3'-end of its cognate tRNA, via the formation of an aminoacyl-adenylate intermediate (Gly-AMP). Also produces diadenosine tetraphosphate (Ap4A), a universal pleiotropic signaling molecule needed for cell regulation pathways, by direct condensation of 2 ATPs. Thereby, may play a special role in Ap4A homeostasis. The chain is Glycine--tRNA ligase from Encephalitozoon cuniculi (strain GB-M1) (Microsporidian parasite).